The primary structure comprises 160 residues: Cytochrome b6-f complex subunit 4 (160 aa).

Transmembrane regions (helical) follow at residues 36–56 (LLYIFPVVILGTIACTVGLAV), 68–88 (PFATPLEILPEWYFFPVFQIL), 95–115 (FFGVLLMTSVPFGLLTVPFLE), and 131–151 (SVFLIGTVISLWLGFGAVLPI).

This sequence belongs to the cytochrome b family. PetD subfamily. The 4 large subunits of the cytochrome b6-f complex are cytochrome b6, subunit IV (17 kDa polypeptide, petD), cytochrome f and the Rieske protein, while the 4 small subunits are petG, petL, petM and petN. The complex functions as a dimer.

Its subcellular location is the plastid. The protein localises to the chloroplast thylakoid membrane. Functionally, component of the cytochrome b6-f complex, which mediates electron transfer between photosystem II (PSII) and photosystem I (PSI), cyclic electron flow around PSI, and state transitions. This is Cytochrome b6-f complex subunit 4 from Welwitschia mirabilis (Tree tumbo).